The primary structure comprises 447 residues: GTPase Der (447 aa).

EngA-type G domains lie at 3–167 and 181–354; these read PVIA…VQER and VKIA…AAAM. Residues 9–16, 56–60, 119–122, 187–194, 234–238, and 299–302 each bind GTP; these read GRPNVGKS, DTGGF, NKAE, DTAGL, and NKWD. One can recognise a KH-like domain in the interval 355–439; it reads VKLPTPQLTR…PLRIEFRTNK (85 aa).

The protein belongs to the TRAFAC class TrmE-Era-EngA-EngB-Septin-like GTPase superfamily. EngA (Der) GTPase family. In terms of assembly, associates with the 50S ribosomal subunit.

Functionally, GTPase that plays an essential role in the late steps of ribosome biogenesis. The polypeptide is GTPase Der (Cupriavidus pinatubonensis (strain JMP 134 / LMG 1197) (Cupriavidus necator (strain JMP 134))).